The primary structure comprises 2359 residues: Neuron navigator 3 (2359 aa).

One can recognise a Calponin-homology (CH) domain in the interval 77–184; the sequence is IEDSKIYTDW…LFFSLSRYKQ (108 aa). 4 stretches are compositionally biased toward polar residues: residues 204–226, 233–243, 257–279, and 300–317; these read THTA…SSLT, SKHSGIATSQK, ASSS…FNSI, and QPSS…TSGQ. Disordered regions lie at residues 204-623 and 641-660; these read THTA…QQQH and ENEG…TKMD. The span at 318-329 shows a compositional bias: low complexity; the sequence is PPASAIPSPSAS. A compositionally biased stretch (polar residues) spans 335-352; that stretch reads KSMNVKHSATSTMLTVKQ. 2 stretches are compositionally biased toward low complexity: residues 353–363 and 427–439; these read PSPATSPTPSS and NSGL…TNSS. The span at 465–491 shows a compositional bias: basic and acidic residues; sequence PKEKEEKTRDKNKACAEKSGKEEKDQV. The segment covering 522 to 536 has biased composition (low complexity); it reads IPSSSGIPKPGSKVP. Over residues 592 to 623 the composition is skewed to polar residues; that stretch reads ASPSSSCVMQVTHSSGQSPGNGAVQLPQQQQH. The stretch at 680–708 forms a coiled coil; it reads EARRMRTVKNIADLRQNLEETMSSLRGTQ. Disordered regions lie at residues 878-1315, 1413-1472, 1653-1758, and 1829-1855; these read ADSW…SPLF, LSES…AMSS, GALN…KPSQ, and ETGN…SRQS. 2 stretches are compositionally biased toward low complexity: residues 883–896 and 904–916; these read DSSS…DTLD and NTTS…SNIT. The segment covering 917-926 has biased composition (polar residues); the sequence is VPSRKNTQLK. Over residues 943–960 the composition is skewed to basic and acidic residues; sequence EELKKAEGDCDSHGDGAA. Composition is skewed to polar residues over residues 978–989 and 997–1013; these read QKASLSVSQTGS and QGGT…TSAL. Over residues 1017–1029 the composition is skewed to basic and acidic residues; that stretch reads GKTDDAKASEKGK. Composition is skewed to low complexity over residues 1077 to 1095 and 1160 to 1173; these read GAST…GSAT and SSTS…SSKS. Positions 1190-1199 are enriched in polar residues; that stretch reads GRSSPVTVNQ. 3 stretches are compositionally biased toward low complexity: residues 1209–1229, 1256–1266, and 1274–1285; these read VSDS…TSAS, GAKAGGKSASA, and SSSVVLSPSTSL. Residues 1299 to 1308 show a composition bias toward gly residues; it reads GSMGSAGGLS. Positions 1439–1448 are enriched in basic and acidic residues; that stretch reads NQEEGKEWLR. Over residues 1449-1461 the composition is skewed to polar residues; it reads SHSTGGLQDTGNQ. 2 positions are modified to phosphoserine: serine 1462 and serine 1466. The segment covering 1462-1472 has biased composition (low complexity); the sequence is SPLVSPSAMSS. The stretch at 1565–1656 forms a coiled coil; the sequence is AEEKAHSEQI…AQAAIQGALN (92 aa). Low complexity-rich tracts occupy residues 1675 to 1692 and 1749 to 1758; these read SVSS…GSGN and SGSSSMKPSQ. Residues 1768–1835 adopt a coiled-coil conformation; that stretch reads EAEAEIILQL…LKAETGNTAK (68 aa). A compositionally biased stretch (low complexity) spans 1841 to 1855; the sequence is SDSSSTASSSSSRQS.

The protein belongs to the Nav/unc-53 family. As to expression, present in neurons from central and peripheral nervous systems (at protein level). Highly expressed in brain cortex, midbrain, cerebellum and hippocampus.

Its subcellular location is the nucleus outer membrane. Its function is as follows. Plays a role in cell migration. May be involved in neuron regeneration. May regulate IL2 production by T-cells. The chain is Neuron navigator 3 (Nav3) from Mus musculus (Mouse).